The sequence spans 189 residues: Peptidyl-tRNA hydrolase (189 aa).

TRNA is bound at residue tyrosine 14. Histidine 19 acts as the Proton acceptor in catalysis. Residues tyrosine 64, asparagine 66, and asparagine 112 each contribute to the tRNA site.

The protein belongs to the PTH family. As to quaternary structure, monomer.

The protein resides in the cytoplasm. The enzyme catalyses an N-acyl-L-alpha-aminoacyl-tRNA + H2O = an N-acyl-L-amino acid + a tRNA + H(+). In terms of biological role, hydrolyzes ribosome-free peptidyl-tRNAs (with 1 or more amino acids incorporated), which drop off the ribosome during protein synthesis, or as a result of ribosome stalling. Functionally, catalyzes the release of premature peptidyl moieties from peptidyl-tRNA molecules trapped in stalled 50S ribosomal subunits, and thus maintains levels of free tRNAs and 50S ribosomes. This is Peptidyl-tRNA hydrolase from Dehalococcoides mccartyi (strain ATCC BAA-2100 / JCM 16839 / KCTC 5957 / BAV1).